Reading from the N-terminus, the 408-residue chain is Heparan-sulfate 6-O-sulfotransferase 1 (408 aa).

Residues 8 to 14 (MVERTSK) are Cytoplasmic-facing. Residues 15-35 (FLLIVAASVCFMLILYQYVGP) traverse the membrane as a helical; Signal-anchor for type II membrane protein segment. Residues 36-408 (GLSLGAPSGR…DYMSHIIEKW (373 aa)) lie on the Lumenal side of the membrane. 90–98 (HIQKTGGTT) is a 3'-phosphoadenylyl sulfate binding site. Residues 120–121 (KK), Arg137, Trp142, and His147 each bind substrate. Residue His147 is the Proton acceptor of the active site. Residues Arg182 and Ser190 each contribute to the 3'-phosphoadenylyl sulfate site. The substrate site is built by His194 and Trp201. A glycan (N-linked (GlcNAc...) asparagine) is linked at Asn261. Residue 314–316 (MQY) coordinates 3'-phosphoadenylyl sulfate. A glycan (N-linked (GlcNAc...) asparagine) is linked at Asn317. 320–321 (RA) serves as a coordination point for 3'-phosphoadenylyl sulfate. Asn328 is a glycosylation site (N-linked (GlcNAc...) asparagine). Positions 348 to 382 (AKDLFQQRYQYKRQLERMEQRIKNREERLLHRSNE) form a coiled coil. The interval 376 to 396 (LLHRSNEALPKEETEEQGRLP) is disordered.

This sequence belongs to the sulfotransferase 6 family. N-glycosylated.

The protein localises to the membrane. The catalysed reaction is alpha-D-glucosaminyl-[heparan sulfate](n) + 3'-phosphoadenylyl sulfate = 6-sulfo-alpha-D-glucosaminyl-[heparan sulfate](n) + adenosine 3',5'-bisphosphate + H(+). Functionally, 6-O-sulfation enzyme which catalyzes the transfer of sulfate from 3'-phosphoadenosine 5'-phosphosulfate (PAPS) to position 6 of the N-sulfoglucosamine residue (GlcNS) of heparan sulfate. May also play a role in limb development. The chain is Heparan-sulfate 6-O-sulfotransferase 1 from Gallus gallus (Chicken).